Consider the following 276-residue polypeptide: Large ribosomal subunit protein uL2 (276 aa).

The disordered stretch occupies residues 224-258 (VAMNPVDHPHGGGEGRTGEGRVPVSPWGTPTKGYR). A compositionally biased stretch (basic and acidic residues) spans 230–242 (DHPHGGGEGRTGE).

It belongs to the universal ribosomal protein uL2 family. In terms of assembly, part of the 50S ribosomal subunit. Forms a bridge to the 30S subunit in the 70S ribosome.

Its function is as follows. One of the primary rRNA binding proteins. Required for association of the 30S and 50S subunits to form the 70S ribosome, for tRNA binding and peptide bond formation. It has been suggested to have peptidyltransferase activity; this is somewhat controversial. Makes several contacts with the 16S rRNA in the 70S ribosome. The chain is Large ribosomal subunit protein uL2 from Polynucleobacter necessarius subsp. necessarius (strain STIR1).